The sequence spans 86 residues: U15-lycotoxin-Ls1d (86 aa).

The signal sequence occupies residues 1–20 (MNSKIFAVLLLLAFLSCVLS). The 46-residue stretch at 21 to 66 (DQYCPKSSITACKKMNIRNDCCKDDDCTGGSWCCATPCGNFCKYPT) folds into the WAP domain. 5 disulfide bridges follow: cysteine 24-cysteine 54, cysteine 32-cysteine 58, cysteine 41-cysteine 53, cysteine 42-cysteine 80, and cysteine 47-cysteine 62.

This sequence belongs to the venom protein 11 family. 01 (wap-1) subfamily. In terms of processing, contains 5 disulfide bonds. As to expression, expressed by the venom gland.

It is found in the secreted. Has antibacterial activity. The protein is U15-lycotoxin-Ls1d of Lycosa singoriensis (Wolf spider).